A 420-amino-acid polypeptide reads, in one-letter code: UDP-N-acetylmuramoylalanine--D-glutamate ligase (420 aa).

Residue 109–115 (GSVGKST) coordinates ATP.

It belongs to the MurCDEF family.

The protein localises to the cytoplasm. The catalysed reaction is UDP-N-acetyl-alpha-D-muramoyl-L-alanine + D-glutamate + ATP = UDP-N-acetyl-alpha-D-muramoyl-L-alanyl-D-glutamate + ADP + phosphate + H(+). It participates in cell wall biogenesis; peptidoglycan biosynthesis. Cell wall formation. Catalyzes the addition of glutamate to the nucleotide precursor UDP-N-acetylmuramoyl-L-alanine (UMA). This chain is UDP-N-acetylmuramoylalanine--D-glutamate ligase, found in Fervidobacterium nodosum (strain ATCC 35602 / DSM 5306 / Rt17-B1).